A 487-amino-acid chain; its full sequence is DNA polymerase delta small subunit (487 aa).

Methionine 1 carries the post-translational modification N-acetylmethionine. Residue serine 20 is modified to Phosphoserine.

Belongs to the DNA polymerase delta/II small subunit family. DNA polymerase delta is a heterotrimer of POL3, POL32 and HYS2.

It localises to the nucleus. The enzyme catalyses DNA(n) + a 2'-deoxyribonucleoside 5'-triphosphate = DNA(n+1) + diphosphate. DNA polymerase delta (DNA polymerase III) participates in chromosomal DNA replication. It is required during synthesis of the leading and lagging DNA strands at the replication fork and binds at/or near replication origins and moves along DNA with the replication fork. It has 3'-5' proofreading exonuclease activity that correct errors arising during DNA replication. It is also involved in DNA synthesis during DNA repair. The polypeptide is DNA polymerase delta small subunit (POL31) (Saccharomyces cerevisiae (strain ATCC 204508 / S288c) (Baker's yeast)).